We begin with the raw amino-acid sequence, 42 residues long: Beta-defensin 6 (42 aa).

Pyrrolidone carboxylic acid is present on Q1. 3 disulfides stabilise this stretch: C9–C38, C16–C31, and C21–C39.

It belongs to the beta-defensin family. In terms of tissue distribution, neutrophilic granules.

It localises to the secreted. In terms of biological role, has bactericidal activity. Active against E.coli ML35 and S.aureus 502A. The polypeptide is Beta-defensin 6 (DEFB6) (Bos taurus (Bovine)).